A 1117-amino-acid chain; its full sequence is WD repeat and HMG-box DNA-binding protein 1 (1117 aa).

WD repeat units lie at residues 11–50 (GHTE…DPKS), 52–91 (NVGE…GILT), 93–131 (FTTN…QQQT), 134–173 (GHDA…CAVS), 184–223 (VNAK…NPFD), 228–267 (SISQ…CMER), and 271–310 (EKGY…SGKV). Serine 333 and serine 377 each carry phosphoserine. A Glycyl lysine isopeptide (Lys-Gly) (interchain with G-Cter in SUMO2) cross-link involves residue lysine 390. Lysine 664 is subject to N6-acetyllysine. The segment at 816 to 885 (LAETQSEEEK…NLFQSANSSD (70 aa)) is disordered. Threonine 819 is modified (phosphothreonine). A Phosphoserine modification is found at serine 821. The span at 861 to 872 (DTVSEEKPESHN) shows a compositional bias: basic and acidic residues. Residues 873–885 (HGQNLFQSANSSD) show a composition bias toward polar residues. A phosphoserine mark is found at serine 910 and serine 923. Residues 911–1005 (SKEPAVSANS…AVCLQNSENQ (95 aa)) are disordered. The segment covering 917-943 (SANSTRSANILDSMNKSSRKSTSLNRM) has biased composition (polar residues). Lysine 953 carries the post-translational modification N6-acetyllysine. The segment covering 962 to 974 (KQASAASYFQKRT) has biased composition (polar residues). The segment covering 975–987 (PQADKTEEVKENP) has biased composition (basic and acidic residues). Residues 988–1004 (KSSSSDAPAVCLQNSEN) are compositionally biased toward polar residues. Residues 1004-1073 (NQRPKTGFQM…SDGAEAKKRK (70 aa)) constitute a DNA-binding region (HMG box). Serine 1030 is modified (phosphoserine). Residues 1054 to 1074 (WTNKAKGETASDGAEAKKRKR) are disordered. Residue lysine 1116 forms a Glycyl lysine isopeptide (Lys-Gly) (interchain with G-Cter in SUMO1); alternate linkage. A Glycyl lysine isopeptide (Lys-Gly) (interchain with G-Cter in SUMO2); alternate cross-link involves residue lysine 1116.

As to quaternary structure, trimer. Interacts with the polymerase alpha catalytic subunit POLA1. Interacts with MCM10. Interacts with DNA2. Interacts with CDC45 and GINS2 subunit of GINS complex; these interactions associate WDHD1 with the CMG helicase complex.

It localises to the nucleus. The protein resides in the nucleoplasm. Its function is as follows. Core replisome component that acts as a replication initiation factor. Binds directly to the CMG complex and functions as a hub to recruit additional proteins to the replication fork. This is WD repeat and HMG-box DNA-binding protein 1 (Wdhd1) from Mus musculus (Mouse).